Here is a 100-residue protein sequence, read N- to C-terminus: NADH-quinone oxidoreductase subunit K (100 aa).

3 consecutive transmembrane segments (helical) span residues 2–22 (IGLT…LVGI), 29–49 (IMLF…LAAI), and 60–80 (IIAF…LGLL).

This sequence belongs to the complex I subunit 4L family. NDH-1 is composed of 14 different subunits. Subunits NuoA, H, J, K, L, M, N constitute the membrane sector of the complex.

The protein localises to the cell inner membrane. The catalysed reaction is a quinone + NADH + 5 H(+)(in) = a quinol + NAD(+) + 4 H(+)(out). Functionally, NDH-1 shuttles electrons from NADH, via FMN and iron-sulfur (Fe-S) centers, to quinones in the respiratory chain. The immediate electron acceptor for the enzyme in this species is believed to be ubiquinone. Couples the redox reaction to proton translocation (for every two electrons transferred, four hydrogen ions are translocated across the cytoplasmic membrane), and thus conserves the redox energy in a proton gradient. The polypeptide is NADH-quinone oxidoreductase subunit K (Campylobacter concisus (strain 13826)).